Here is a 1370-residue protein sequence, read N- to C-terminus: DNA-directed RNA polymerase subunit beta (1370 aa).

It belongs to the RNA polymerase beta chain family. As to quaternary structure, the RNAP catalytic core consists of 2 alpha, 1 beta, 1 beta' and 1 omega subunit. When a sigma factor is associated with the core the holoenzyme is formed, which can initiate transcription.

The enzyme catalyses RNA(n) + a ribonucleoside 5'-triphosphate = RNA(n+1) + diphosphate. DNA-dependent RNA polymerase catalyzes the transcription of DNA into RNA using the four ribonucleoside triphosphates as substrates. The protein is DNA-directed RNA polymerase subunit beta of Geobacter metallireducens (strain ATCC 53774 / DSM 7210 / GS-15).